The following is an 80-amino-acid chain: Small ribosomal subunit protein uS17c (80 aa).

This sequence belongs to the universal ribosomal protein uS17 family. In terms of assembly, part of the 30S ribosomal subunit.

The protein localises to the plastid. The protein resides in the chloroplast. Functionally, one of the primary rRNA binding proteins, it binds specifically to the 5'-end of 16S ribosomal RNA. The sequence is that of Small ribosomal subunit protein uS17c (rps17) from Gracilaria tenuistipitata var. liui (Red alga).